Here is a 123-residue protein sequence, read N- to C-terminus: Protein Wnt-3a (123 aa).

S1 carries O-palmitoleoyl serine lipidation. A disulfide bond links C89 and C104. N90 is a glycosylation site (N-linked (GlcNAc...) asparagine).

Belongs to the Wnt family. Disulfide bonds have critical and distinct roles in secretion and activity. Loss of each conserved cysteine results in high molecular weight oxidized Wnt oligomers, which are formed through inter-Wnt disulfide bonding. Post-translationally, palmitoleoylation is required for efficient binding to frizzled receptors. Depalmitoleoylation leads to Wnt signaling pathway inhibition.

Its subcellular location is the secreted. The protein localises to the extracellular space. It is found in the extracellular matrix. Functionally, ligand for members of the frizzled family of seven transmembrane receptors. Functions in the canonical Wnt signaling pathway that results in activation of transcription factors of the TCF/LEF family. Required for normal embryonic mesoderm development and formation of caudal somites. Required for normal morphogenesis of the developing neural tube. The sequence is that of Protein Wnt-3a (WNT-3A) from Pituophis melanoleucus (Pine snake).